We begin with the raw amino-acid sequence, 489 residues long: Mitogen-activated protein kinase adapter protein MST50 (489 aa).

The disordered stretch occupies residues 1–56; that stretch reads MSFNTGTAYAESDADDEYERDIHDSSPIDATDAEASPTESDPPSNEHTPTTYGYRS. The span at 37-54 shows a compositional bias: polar residues; it reads PTESDPPSNEHTPTTYGY. Residues 69 to 132 enclose the SAM domain; that stretch reads WTADECADFI…LRSVYDVKKA (64 aa). Disordered stretches follow at residues 207-285 and 309-379; these read PLPH…AAER and SINI…GSNA. 2 stretches are compositionally biased toward polar residues: residues 256 to 265 and 328 to 346; these read PKATSPTHLQ and ASRSYRSDQPTPSSRSTFA. Residues 377–457 enclose the Ras-associating domain; it reads SNASVEIFKS…PMFMLRKTNN (81 aa).

As to quaternary structure, interacts with MST7 and MST11. Interacts with MCK1, MKK2 and HIK1.

Functionally, mitogen-activated protein kinase adapter protein; part of the MST11-MST7-PMK1 MAP kinase (MAPK) cascade that is essential for appressorium formation, penetration and invasive growth. Binds to the MAPKKK MST11 and the MAPKK MST7 to maintain the stability of the MST11-MST7 complex for the phosphorylation of the MAPK PMK1. Is also involved in the MPS1 and OSM1 MAPK pathways, and especially plays a role in the activation of MPS1 in response to cell wall stress. Its function differs in the 3 MAPK pathways. The sequence is that of Mitogen-activated protein kinase adapter protein MST50 from Pyricularia oryzae (strain 70-15 / ATCC MYA-4617 / FGSC 8958) (Rice blast fungus).